The chain runs to 378 residues: Lipid-A-disaccharide synthase (378 aa).

This sequence belongs to the LpxB family.

It carries out the reaction a lipid X + a UDP-2-N,3-O-bis[(3R)-3-hydroxyacyl]-alpha-D-glucosamine = a lipid A disaccharide + UDP + H(+). It participates in bacterial outer membrane biogenesis; LPS lipid A biosynthesis. Condensation of UDP-2,3-diacylglucosamine and 2,3-diacylglucosamine-1-phosphate to form lipid A disaccharide, a precursor of lipid A, a phosphorylated glycolipid that anchors the lipopolysaccharide to the outer membrane of the cell. The chain is Lipid-A-disaccharide synthase from Pseudomonas paraeruginosa (strain DSM 24068 / PA7) (Pseudomonas aeruginosa (strain PA7)).